We begin with the raw amino-acid sequence, 475 residues long: UDP-N-acetylmuramate--L-alanine ligase (475 aa).

Position 119–125 (119–125 (GTHGKTT)) interacts with ATP.

The protein belongs to the MurCDEF family.

It is found in the cytoplasm. It carries out the reaction UDP-N-acetyl-alpha-D-muramate + L-alanine + ATP = UDP-N-acetyl-alpha-D-muramoyl-L-alanine + ADP + phosphate + H(+). It participates in cell wall biogenesis; peptidoglycan biosynthesis. Cell wall formation. The chain is UDP-N-acetylmuramate--L-alanine ligase from Wigglesworthia glossinidia brevipalpis.